The sequence spans 134 residues: Major pollen allergen Lol p 11 (134 aa).

3 cysteine pairs are disulfide-bonded: cysteine 14-cysteine 85, cysteine 17-cysteine 127, and cysteine 38-cysteine 73. N-linked (GlcNAc...) asparagine glycosylation occurs at asparagine 24.

The protein belongs to the Ole e I family.

Its subcellular location is the secreted. This is Major pollen allergen Lol p 11 from Lolium perenne (Perennial ryegrass).